We begin with the raw amino-acid sequence, 352 residues long: Beta-hexosaminidase (352 aa).

Substrate contacts are provided by residues Asp74, Arg82, Arg149, and 179–180 (KH). His192 functions as the Proton donor/acceptor in the catalytic mechanism. Asp263 acts as the Nucleophile in catalysis.

This sequence belongs to the glycosyl hydrolase 3 family. NagZ subfamily.

It is found in the cytoplasm. It catalyses the reaction Hydrolysis of terminal non-reducing N-acetyl-D-hexosamine residues in N-acetyl-beta-D-hexosaminides.. It functions in the pathway cell wall biogenesis; peptidoglycan recycling. Its function is as follows. Plays a role in peptidoglycan recycling by cleaving the terminal beta-1,4-linked N-acetylglucosamine (GlcNAc) from peptide-linked peptidoglycan fragments, giving rise to free GlcNAc, anhydro-N-acetylmuramic acid and anhydro-N-acetylmuramic acid-linked peptides. This is Beta-hexosaminidase from Bordetella pertussis (strain Tohama I / ATCC BAA-589 / NCTC 13251).